We begin with the raw amino-acid sequence, 398 residues long: Ubiquitin carboxyl-terminal hydrolase 17-like protein 6 (398 aa).

Residues 80–375 (AGLQNMGNTC…QAYVLFYIQK (296 aa)) form the USP domain. Residue cysteine 89 is the Nucleophile of the active site. Histidine 334 acts as the Proton acceptor in catalysis.

This sequence belongs to the peptidase C19 family. USP17 subfamily.

The protein resides in the nucleus. Its subcellular location is the cytoplasm. It catalyses the reaction Thiol-dependent hydrolysis of ester, thioester, amide, peptide and isopeptide bonds formed by the C-terminal Gly of ubiquitin (a 76-residue protein attached to proteins as an intracellular targeting signal).. Functionally, deubiquitinating enzyme that removes conjugated ubiquitin from specific proteins to regulate different cellular processes that may include cell proliferation, progression through the cell cycle, cell migration, and the cellular response to viral infection. Seems to be non-functional in the regulation of apoptosis. This Homo sapiens (Human) protein is Ubiquitin carboxyl-terminal hydrolase 17-like protein 6 (USP17L6P).